The primary structure comprises 305 residues: Dermonecrotic toxin LiSicTox-alphaII1 (305 aa).

The signal sequence occupies residues Met-1 to Gly-18. The propeptide occupies Ala-19 to Arg-26. His-38 is a catalytic residue. Mg(2+) contacts are provided by Glu-58 and Asp-60. The active-site Nucleophile is the His-74. Intrachain disulfides connect Cys-78–Cys-84 and Cys-80–Cys-223. Asp-118 provides a ligand contact to Mg(2+).

It belongs to the arthropod phospholipase D family. Class II subfamily. Class IIa sub-subfamily. It depends on Mg(2+) as a cofactor. In terms of tissue distribution, expressed by the venom gland.

The protein localises to the secreted. It catalyses the reaction an N-(acyl)-sphingosylphosphocholine = an N-(acyl)-sphingosyl-1,3-cyclic phosphate + choline. The enzyme catalyses an N-(acyl)-sphingosylphosphoethanolamine = an N-(acyl)-sphingosyl-1,3-cyclic phosphate + ethanolamine. The catalysed reaction is a 1-acyl-sn-glycero-3-phosphocholine = a 1-acyl-sn-glycero-2,3-cyclic phosphate + choline. It carries out the reaction a 1-acyl-sn-glycero-3-phosphoethanolamine = a 1-acyl-sn-glycero-2,3-cyclic phosphate + ethanolamine. Functionally, dermonecrotic toxins cleave the phosphodiester linkage between the phosphate and headgroup of certain phospholipids (sphingolipid and lysolipid substrates), forming an alcohol (often choline) and a cyclic phosphate. This toxin acts on sphingomyelin (SM) wih high activity. It may also act on ceramide phosphoethanolamine (CPE), lysophosphatidylcholine (LPC) and lysophosphatidylethanolamine (LPE), but not on lysophosphatidylserine (LPS), and lysophosphatidylglycerol (LPG). It acts by transphosphatidylation, releasing exclusively cyclic phosphate products as second products. Shows high hemolytic activity. Causes dermonecrosis, induces inflammatory response, platelet aggregation and increases vessel permeability. Shows no lethality when injected at higher dose into mice. May cause complement-dependent hemolysis as well as in a complement-independent manner. The hemolysis provoked in a complement-independent manner may be composed of several steps. The toxin may bind to erythrocyte membranes, may hydrolyze membrane phospholipids (SM and LPC) thus generating metabolism products that may cause hemolysis, probably by provoking an increase of calcium inside cells. The calcium influx may be due to the opening of L-type calcium channels, since L-type calcium channel blockers inhibit calcium influx. In Loxosceles intermedia (Brown spider), this protein is Dermonecrotic toxin LiSicTox-alphaII1.